The chain runs to 407 residues: Membrane protein MosC (407 aa).

The segment at 1 to 24 is disordered; the sequence is MTRTSPRHHAPSETKRRVPMGGVH. 11 helical membrane-spanning segments follow: residues 31-51, 69-89, 109-129, 157-177, 186-206, 225-245, 255-275, 290-310, 316-336, 347-367, and 377-397; these read LTITAVAFQFFINGLVLAAWA, GVLLLIMAAGALLFMSLAGYF, ALVLIFAAPNCMTFLCSIVLF, AFLHGCSSTGILAGIMTFGVI, SVTLLTGILIVARWLFPHLLD, LLMFGILSFLTMVTDGAIAEW, QVTDQVGSLGYVAFTLLMIAG, ALIAISGSLASAGMTTALFMP, LAGFALLGLGMANLVPIIFSE, VGLTFVSVCGYSGFLVGPPII, and GRALLFIIAVGVIVACASVFF.

The protein localises to the cell membrane. May be a membrane transport protein that could either transport a precursor for rhizopine biosynthesis into bacteroids or the finished product from the bacteroids. This is Membrane protein MosC (mosC) from Rhizobium meliloti (Ensifer meliloti).